The chain runs to 76 residues: Conotoxin Vc6.6 (76 aa).

The signal sequence occupies residues 1–22 (MKLTCMVIVAVLFLTANTFVTA). A propeptide spanning residues 23 to 52 (VPHSSNALENLYLKAHHEMNNPKDSELNKR) is cleaved from the precursor. 3 disulfide bridges follow: Cys53/Cys67, Cys60/Cys71, and Cys66/Cys75.

This sequence belongs to the conotoxin O1 superfamily. Expressed by the venom duct.

It localises to the secreted. The polypeptide is Conotoxin Vc6.6 (Conus victoriae (Queen Victoria cone)).